We begin with the raw amino-acid sequence, 855 residues long: Transcription factor gaf1 (855 aa).

A compositionally biased stretch (polar residues) spans 72-112 (KNLTPNGDSNTLTPDTFSDPTAPSSAQSVPPTSSAETTADN). 6 disordered regions span residues 72–126 (KNLT…PAYS), 149–184 (TSFDESTAKSKKRSIADSHFPDPNAMQRPHDLESQP), 229–287 (SHNL…GFPS), 412–483 (PNSN…DMFS), 602–643 (NKNA…TRTT), and 680–768 (KKRN…SQSM). Residues 149 to 168 (TSFDESTAKSKKRSIADSHF) are compositionally biased toward basic and acidic residues. S150 carries the phosphoserine modification. 2 stretches are compositionally biased toward low complexity: residues 240-250 (PANSNNSASPN) and 428-444 (NSSKSVGQGSSGVDSNQ). A compositionally biased stretch (polar residues) spans 445-476 (ENAESFNPSISSHNSAEWASGETTGHSSNSPL). The segment covering 614–623 (AEDKKGDANT) has biased composition (basic and acidic residues). 2 stretches are compositionally biased toward low complexity: residues 625–643 (RANATNPTPTCTNCQTRTT) and 707–717 (SKSSSAKSTAA). The segment at 635–659 (CTNCQTRTTPLWRRSPDGQPLCNAC) adopts a GATA-type zinc-finger fold. Phosphoserine occurs at positions 727 and 729. Low complexity predominate over residues 755-767 (QQQSSENESKSQS).

It localises to the nucleus. Functionally, transcriptional activator. This chain is Transcription factor gaf1 (gaf1), found in Schizosaccharomyces pombe (strain 972 / ATCC 24843) (Fission yeast).